We begin with the raw amino-acid sequence, 171 residues long: Iron-sulfur cluster assembly protein 3 (171 aa).

A mitochondrion-targeting transit peptide spans 1 to 49; the sequence is MLRQTTKRAFLGLASQNPTPFPVVSRLYHPNVIDHYDNPRNVGSFDKND.

The protein belongs to the NifU family. As to quaternary structure, component of the core Fe-S cluster (ISC) assembly machinery. [2Fe-2S] cluster serves as cofactor. In terms of tissue distribution, mostly expressed in flowers and pollen, and, to a lower extent, in leaves and roots.

It localises to the mitochondrion matrix. The protein operates within cofactor biosynthesis; iron-sulfur cluster biosynthesis. Its function is as follows. Scaffold protein for the de novo synthesis of iron-sulfur (Fe-S) clusters within mitochondria, which is required for maturation of both mitochondrial and cytoplasmic [2Fe-2S] and [4Fe-4S] proteins. First, a [2Fe-2S] cluster is transiently assembled on the scaffold protein ISCU (ISU1, ISU2 or ISU3). In a second step, the cluster is released from ISCU, transferred to a glutaredoxin, followed by the formation of mitochondrial [2Fe-2S] proteins, the synthesis of [4Fe-4S] clusters and their target-specific insertion into the recipient apoproteins. Cluster assembly on ISCU depends on the function of the cysteine desulfurase complex NFS1-ISD11, which serves as the sulfur donor for cluster synthesis, the iron-binding protein frataxin as the putative iron donor, and the electron transfer chain comprised of ferredoxin reductase and ferredoxin, which receive their electrons from NADH. The sequence is that of Iron-sulfur cluster assembly protein 3 (ISU3) from Arabidopsis thaliana (Mouse-ear cress).